The sequence spans 573 residues: 2-succinyl-5-enolpyruvyl-6-hydroxy-3-cyclohexene-1-carboxylate synthase (573 aa).

This sequence belongs to the TPP enzyme family. MenD subfamily. As to quaternary structure, homodimer. Mg(2+) is required as a cofactor. Requires Mn(2+) as cofactor. Thiamine diphosphate serves as cofactor.

The catalysed reaction is isochorismate + 2-oxoglutarate + H(+) = 5-enolpyruvoyl-6-hydroxy-2-succinyl-cyclohex-3-ene-1-carboxylate + CO2. It participates in quinol/quinone metabolism; 1,4-dihydroxy-2-naphthoate biosynthesis; 1,4-dihydroxy-2-naphthoate from chorismate: step 2/7. It functions in the pathway quinol/quinone metabolism; menaquinone biosynthesis. In terms of biological role, catalyzes the thiamine diphosphate-dependent decarboxylation of 2-oxoglutarate and the subsequent addition of the resulting succinic semialdehyde-thiamine pyrophosphate anion to isochorismate to yield 2-succinyl-5-enolpyruvyl-6-hydroxy-3-cyclohexene-1-carboxylate (SEPHCHC). The sequence is that of 2-succinyl-5-enolpyruvyl-6-hydroxy-3-cyclohexene-1-carboxylate synthase from Shewanella sp. (strain MR-4).